The sequence spans 371 residues: Putative glutamate--cysteine ligase 2 (371 aa).

Belongs to the glutamate--cysteine ligase type 2 family. YbdK subfamily. Homodimer.

The enzyme catalyses L-cysteine + L-glutamate + ATP = gamma-L-glutamyl-L-cysteine + ADP + phosphate + H(+). ATP-dependent carboxylate-amine ligase which exhibits weak glutamate--cysteine ligase activity. This chain is Putative glutamate--cysteine ligase 2, found in Klebsiella pneumoniae (strain 342).